Consider the following 163-residue polypeptide: Phosphopantetheine adenylyltransferase (163 aa).

Position 11 (Thr-11) interacts with substrate. ATP is bound by residues 11–12 and His-19; that span reads TF. Substrate-binding residues include Lys-43, Leu-75, and Arg-89. Residues 90-92, Glu-100, and 125-131 each bind ATP; these read GLR and YMFISAT.

Belongs to the bacterial CoaD family. In terms of assembly, homohexamer. Mg(2+) is required as a cofactor.

The protein resides in the cytoplasm. The catalysed reaction is (R)-4'-phosphopantetheine + ATP + H(+) = 3'-dephospho-CoA + diphosphate. It participates in cofactor biosynthesis; coenzyme A biosynthesis; CoA from (R)-pantothenate: step 4/5. Reversibly transfers an adenylyl group from ATP to 4'-phosphopantetheine, yielding dephospho-CoA (dPCoA) and pyrophosphate. This Azoarcus sp. (strain BH72) protein is Phosphopantetheine adenylyltransferase.